Here is a 589-residue protein sequence, read N- to C-terminus: Probable peptidoglycan D,D-transpeptidase FtsI (589 aa).

The chain crosses the membrane as a helical span at residues 47–67 (IFLVMGFFGFCFVGVSLGAGW). The active-site Acyl-ester intermediate is Ser296.

It belongs to the transpeptidase family. As to quaternary structure, interacts with FtsN and FtsW.

The protein localises to the cell inner membrane. The enzyme catalyses Preferential cleavage: (Ac)2-L-Lys-D-Ala-|-D-Ala. Also transpeptidation of peptidyl-alanyl moieties that are N-acyl substituents of D-alanine.. Its pathway is cell wall biogenesis; peptidoglycan biosynthesis. Its function is as follows. Catalyzes cross-linking of the peptidoglycan cell wall at the division septum. This chain is Probable peptidoglycan D,D-transpeptidase FtsI (ftsI), found in Caulobacter vibrioides (strain NA1000 / CB15N) (Caulobacter crescentus).